Reading from the N-terminus, the 149-residue chain is Transcription antitermination protein NusB (149 aa).

This sequence belongs to the NusB family.

Its function is as follows. Involved in transcription antitermination. Required for transcription of ribosomal RNA (rRNA) genes. Binds specifically to the boxA antiterminator sequence of the ribosomal RNA (rrn) operons. The chain is Transcription antitermination protein NusB from Caulobacter vibrioides (strain ATCC 19089 / CIP 103742 / CB 15) (Caulobacter crescentus).